Reading from the N-terminus, the 529-residue chain is Transcription factor BIM1 (529 aa).

Disordered stretches follow at residues 1-91 (MELP…HVLP), 245-291 (KKES…RRSK), 425-450 (RVAS…EEVL), and 491-529 (AKQS…KTGQ). Over residues 76–86 (KPPPPAPPPPL) the composition is skewed to pro residues. Composition is skewed to basic and acidic residues over residues 255 to 265 (HRVDLRVKADV) and 282 to 291 (SATEQRRRSK). The region spanning 276–326 (TPRSKHSATEQRRRSKINDRFQMLRQLIPNSDQKRDKASFLLEVIEYIQFL) is the bHLH domain. Positions 426–438 (VASSEAVEPSPSS) are enriched in low complexity. Positions 499 to 517 (FKDHEVREPVSRTRNDNVK) are enriched in basic and acidic residues. Residues 518–529 (QTRKPKRLKTGQ) show a composition bias toward basic residues.

Homodimer. Interacts with BZR2/BES1 through both C-terminal and bHLH domains. Also interacts with LHW. Expressed constitutively in roots.

The protein localises to the nucleus. Functionally, positive brassinosteroid-signaling protein. Transcription factor that bind specifically to the DNA sequence 5'-CANNTG-3'(E box). Can bind individually to the promoter as a homodimer or synergistically as a heterodimer with BZR2/BES1. Does not itself activate transcription but enhances BZR2/BES1-mediated target gene activation. The chain is Transcription factor BIM1 (BIM1) from Arabidopsis thaliana (Mouse-ear cress).